Consider the following 1436-residue polypeptide: MLNDILSRVARVGAMHAGNRPNPPADRPQPCQGKPPTSPGKTIKHKSFLGALAGAVAGALVAAAVAAAAVFLVGVTGGLAVAAVGALAVFAAGDLISAVTNKVSAVVDSASPAFGPVASGSGNVFVEKQPVARATKDTVACTKHNSPQLIAQGSESVFVNDAPAARIDDKTVCGATLKEGASTVFFGSGQGTYLEIADEFSWWEKALLIAVEFLVPPSRGMLKGLGKLFTRNGLKSVLKGAKAGALFITKVPGKMGCAARAFKANKGMARFKEAAKAFKKDPVYLASGEVIESRTDIELGQTLPLVFERTYRSASAHTGLLGRGWHDSWSEVATVTHDGLNTHVVITLAQGYDIDFTFHQDVQAVYCPHYPEFTLHRRGDGFSLWHRDQQTWRDFSVVQGERRLLSAIHDSHDNRIELVRDPKGYLRQLRHSDGVTLLLVWQGEYLHQIQRIDGGQKTLLAEYRQDEQGRLVEANATHAYHLYYEYNTAHRLTRWHDNDQTWARYEYDAQGRCVYTTCADGFLTARFDYLPDRVVMTDGLGQRSEFGFNDLHLMSWEQSPLGHITRYEYDEVGNLLREISPAGRVVEFTYLDDTGRVSTFTDGSGHQWQYDYDDAQRLCGVTDPLGREWGWVYDAEGNPERLTGPDASEVRFTWNRYGLLTQVSDAAGEVQARLQYDHRQRLLSATDAESRTRQLRYDRQDRVVQWQRADGARFRLGYRRASWTLPEQLIRPDDKEEQRQYDRHNNLLSYVDGNGALWRQTFGPFDLLTARTDAEGRTWRYEYDRESQQLIAVTAPDGSRWQWWLDADGRVIRERDMTGTETHYGYDEDGLCIRVRNGEGDTRHFLYDARGLLLRETAPDDTLHYRYDAAGRLTEVSSATAHVQLDYDLRDRVVREWHNGTLLTRQYDDAARTVTRTLTWDGDADDTTGTLAPLTSLFHYTRTGELRQVQLPDGADLTLTHDAAGRESLRTGGSGFVQQREYDVMGWLTREQSGAQHDGRLQPAQTREYRYDGAGNLTGVRHNRDAEGYRLDATGRVQEMLSGGAGKPVDTTARFHYTRTGLPQEAGRLTEWQAGRLVQHDDTHYQYDRAGRLIRKQVVQPGYRPQVWQYRWDSRNQLRVVDTPNGERWLYRYDPFGRRVGKRCDQKAEETRYLWDGDQIAEIRHYRHGQLIQRRHWVYNGWELVVQQRQHTGGDWETDFVTSSQNGTPQALFTPDGTLRWQVPKATLWGQRQTEKSESPDPGLAFAGQLRDSESGLCYNRFRYYDPAGGCYVSPDPIGIAGGESNYGYVQNPNTRVDPLGLAGCAMGEILADADKWSLAKIGDRQKGMIKDKLSTVKERSKALNTKMREHFNANEQKIISEWEKQTGMNWPTLSSGSRATPHHVIPIKNGGSNEWWNIIPVQHPHTGTIHGTGSALRTHLPYQKDGGKLWNLLGY.

A disordered region spans residues 16–42 (HAGNRPNPPADRPQPCQGKPPTSPGKT). Transmembrane regions (helical) follow at residues 48–68 (FLGA…VAAA) and 70–90 (VFLV…LAVF). YD repeat units follow at residues 486–521 (YNTA…CADG), 569–605 (YDEV…DGSG), 612–647 (YDDA…GPDA), 766–799 (DLLT…PDGS), and 847–879 (YDAR…VSSA).

The protein belongs to the RHS/WapA nuclease family.

It localises to the membrane. Its function is as follows. Toxic component of a toxin-immunity protein module, which functions as a cellular contact-dependent growth inhibition (CDI) system. This protein may be a nuclease that is specifically inhibited by its cognate immunity protein RhsBI. Upon expression of the C-terminus (residues 1284-1436) in E.coli growth is inhibited, cells elongate, nucleoids condense and plasmid DNA is degraded; these effects are blocked specifically by cognate immunity protein RshIB. Cell contact is necessary for growth inhibition. In Dickeya dadantii (strain 3937) (Erwinia chrysanthemi (strain 3937)), this protein is Probable deoxyribonuclease RhsB (rhsB).